The primary structure comprises 339 residues: Phenylalanine--tRNA ligase alpha subunit (339 aa).

Glu-254 is a Mg(2+) binding site.

This sequence belongs to the class-II aminoacyl-tRNA synthetase family. Phe-tRNA synthetase alpha subunit type 1 subfamily. Tetramer of two alpha and two beta subunits. Mg(2+) serves as cofactor.

It is found in the cytoplasm. The catalysed reaction is tRNA(Phe) + L-phenylalanine + ATP = L-phenylalanyl-tRNA(Phe) + AMP + diphosphate + H(+). The protein is Phenylalanine--tRNA ligase alpha subunit of Clostridium botulinum (strain 657 / Type Ba4).